The following is an 80-amino-acid chain: ATP synthase subunit c (80 aa).

Transmembrane regions (helical) follow at residues Ile-11 to Leu-31 and Phe-54 to Ile-74.

The protein belongs to the ATPase C chain family. In terms of assembly, F-type ATPases have 2 components, F(1) - the catalytic core - and F(0) - the membrane proton channel. F(1) has five subunits: alpha(3), beta(3), gamma(1), delta(1), epsilon(1). F(0) has three main subunits: a(1), b(2) and c(10-14). The alpha and beta chains form an alternating ring which encloses part of the gamma chain. F(1) is attached to F(0) by a central stalk formed by the gamma and epsilon chains, while a peripheral stalk is formed by the delta and b chains.

It localises to the cell membrane. In terms of biological role, f(1)F(0) ATP synthase produces ATP from ADP in the presence of a proton or sodium gradient. F-type ATPases consist of two structural domains, F(1) containing the extramembraneous catalytic core and F(0) containing the membrane proton channel, linked together by a central stalk and a peripheral stalk. During catalysis, ATP synthesis in the catalytic domain of F(1) is coupled via a rotary mechanism of the central stalk subunits to proton translocation. Key component of the F(0) channel; it plays a direct role in translocation across the membrane. A homomeric c-ring of between 10-14 subunits forms the central stalk rotor element with the F(1) delta and epsilon subunits. In Baumannia cicadellinicola subsp. Homalodisca coagulata, this protein is ATP synthase subunit c.